The sequence spans 149 residues: Myoglobin (149 aa).

An N-acetylalanine modification is found at alanine 2. The Globin domain maps to 2 to 143 (ABWDKVNSVW…ICSDIEKEYK (142 aa)). Histidine 89 is a heme b binding site.

Belongs to the globin family. In terms of assembly, monomeric.

It localises to the cytoplasm. Its subcellular location is the sarcoplasm. The enzyme catalyses Fe(III)-heme b-[protein] + nitric oxide + H2O = Fe(II)-heme b-[protein] + nitrite + 2 H(+). It catalyses the reaction H2O2 + AH2 = A + 2 H2O. Its function is as follows. Monomeric heme protein which primary function is to store oxygen and facilitate its diffusion within muscle tissues. Reversibly binds oxygen through a pentacoordinated heme iron and enables its timely and efficient release as needed during periods of heightened demand. Depending on the oxidative conditions of tissues and cells, and in addition to its ability to bind oxygen, it also has a nitrite reductase activity whereby it regulates the production of bioactive nitric oxide. Under stress conditions, like hypoxia and anoxia, it also protects cells against reactive oxygen species thanks to its pseudoperoxidase activity. This chain is Myoglobin (mb), found in Hemitriakis japanica (Japanese topeshark).